The chain runs to 423 residues: Glutamate-1-semialdehyde 2,1-aminomutase (423 aa).

Lys-258 is subject to N6-(pyridoxal phosphate)lysine.

Belongs to the class-III pyridoxal-phosphate-dependent aminotransferase family. HemL subfamily. Pyridoxal 5'-phosphate is required as a cofactor.

It localises to the cytoplasm. The enzyme catalyses (S)-4-amino-5-oxopentanoate = 5-aminolevulinate. It participates in porphyrin-containing compound metabolism; protoporphyrin-IX biosynthesis; 5-aminolevulinate from L-glutamyl-tRNA(Glu): step 2/2. In Pyrobaculum aerophilum (strain ATCC 51768 / DSM 7523 / JCM 9630 / CIP 104966 / NBRC 100827 / IM2), this protein is Glutamate-1-semialdehyde 2,1-aminomutase.